The following is a 148-amino-acid chain: Deoxyuridine 5'-triphosphate nucleotidohydrolase (148 aa).

Residues Arg68–Gly70, Asn81, Thr85–Asp87, and Lys95 each bind substrate.

This sequence belongs to the dUTPase family. It depends on Mg(2+) as a cofactor.

It carries out the reaction dUTP + H2O = dUMP + diphosphate + H(+). It functions in the pathway pyrimidine metabolism; dUMP biosynthesis; dUMP from dCTP (dUTP route): step 2/2. In terms of biological role, this enzyme is involved in nucleotide metabolism: it produces dUMP, the immediate precursor of thymidine nucleotides and it decreases the intracellular concentration of dUTP so that uracil cannot be incorporated into DNA. The sequence is that of Deoxyuridine 5'-triphosphate nucleotidohydrolase from Rickettsia conorii (strain ATCC VR-613 / Malish 7).